The primary structure comprises 297 residues: GTPase Era (297 aa).

The 168-residue stretch at 7 to 174 folds into the Era-type G domain; the sequence is HSGFVSIIGR…VQVVRDLLPE (168 aa). The tract at residues 15–22 is G1; that stretch reads GRPNVGKS. GTP is bound at residue 15–22; the sequence is GRPNVGKS. Positions 41 to 45 are G2; the sequence is QTTRN. The G3 stretch occupies residues 62 to 65; sequence DTPG. GTP contacts are provided by residues 62–66 and 124–127; these read DTPGI and NKVD. The tract at residues 124-127 is G4; it reads NKVD. Residues 153 to 155 are G5; that stretch reads VSA. The region spanning 205 to 282 is the KH type-2 domain; the sequence is THDEVPYSVA…FLELFVRVSR (78 aa).

Belongs to the TRAFAC class TrmE-Era-EngA-EngB-Septin-like GTPase superfamily. Era GTPase family. Monomer.

Its subcellular location is the cytoplasm. It localises to the cell inner membrane. In terms of biological role, an essential GTPase that binds both GDP and GTP, with rapid nucleotide exchange. Plays a role in 16S rRNA processing and 30S ribosomal subunit biogenesis and possibly also in cell cycle regulation and energy metabolism. The sequence is that of GTPase Era from Geotalea daltonii (strain DSM 22248 / JCM 15807 / FRC-32) (Geobacter daltonii).